We begin with the raw amino-acid sequence, 314 residues long: Serine/threonine-protein phosphatase CPPED1 (314 aa).

A Phosphoserine modification is found at serine 2. Positions 47 to 250 (KAWSTGDCDN…KVVFSGHYHR (204 aa)) are catalytic. 4 residues coordinate a divalent metal cation: aspartate 53, aspartate 90, asparagine 127, and histidine 247. Position 294 is a phosphoserine (serine 294).

It belongs to the metallophosphoesterase superfamily. CPPED1 family. It depends on a divalent metal cation as a cofactor. Expressed in subcutaneous adipose tissue.

The protein resides in the cytoplasm. The catalysed reaction is O-phospho-L-seryl-[protein] + H2O = L-seryl-[protein] + phosphate. It catalyses the reaction O-phospho-L-threonyl-[protein] + H2O = L-threonyl-[protein] + phosphate. Protein phosphatase that dephosphorylates AKT family kinase specifically at 'Ser-473', blocking cell cycle progression and promoting cell apoptosis. May play an inhibitory role in glucose uptake by adipocytes. The sequence is that of Serine/threonine-protein phosphatase CPPED1 (CPPED1) from Homo sapiens (Human).